The following is a 157-amino-acid chain: UPF0225 protein PA1039 (157 aa).

The protein belongs to the UPF0225 family.

The sequence is that of UPF0225 protein PA1039 from Pseudomonas aeruginosa (strain ATCC 15692 / DSM 22644 / CIP 104116 / JCM 14847 / LMG 12228 / 1C / PRS 101 / PAO1).